We begin with the raw amino-acid sequence, 249 residues long: MGIEVISILVGGGNNYMHLFYDDDAAFCVDASNPRILLKALGINFKKSIYDEKEIFSMGEDRKKRRELVYLFTTHKHLDHSAGIRCISEESPNTKTISGFSGDICKSGDKFRFKDVEIECFHTPCHTVDSFCFYVGEKYLATGDTLLFLGCGKFFGGTPGQMIKNIEEIKKRVNHDAVLLYGHDYSEQNIRFTEEFYHVPEEIKKKKFLKLAEEIKYNPFFNLKKVSIEGSEEEVMGKLRERKNKFSKE.

Residues His-75, His-77, Asp-79, His-80, His-126, Asp-144, and His-183 each contribute to the Zn(2+) site. Residues 183-185 and 240-243 each bind substrate; these read HDY and RERK.

This sequence belongs to the metallo-beta-lactamase superfamily. Glyoxalase II family. Requires Zn(2+) as cofactor.

Its subcellular location is the cytoplasm. The protein resides in the nucleus. It carries out the reaction an S-(2-hydroxyacyl)glutathione + H2O = a 2-hydroxy carboxylate + glutathione + H(+). The protein operates within secondary metabolite metabolism; methylglyoxal degradation; (R)-lactate from methylglyoxal: step 2/2. In terms of biological role, thiolesterase that catalyzes the hydrolysis of S-D-lactoyl-glutathione to form glutathione and D-lactic acid. This is Probable hydroxyacylglutathione hydrolase ECU02_0580 from Encephalitozoon cuniculi (strain GB-M1) (Microsporidian parasite).